A 118-amino-acid polypeptide reads, in one-letter code: Vitelline coat lysin (118 aa).

This Tegula pfeifferi (Pfeiffer's top shell) protein is Vitelline coat lysin.